The following is a 79-amino-acid chain: ATP synthase subunit c (79 aa).

2 consecutive transmembrane segments (helical) span residues 11–31 (IAVAIMVGLASIGAAIGIGIL) and 53–73 (FFVVMGLVDAIPMIAVGLGLY).

Belongs to the ATPase C chain family. As to quaternary structure, F-type ATPases have 2 components, F(1) - the catalytic core - and F(0) - the membrane proton channel. F(1) has five subunits: alpha(3), beta(3), gamma(1), delta(1), epsilon(1). F(0) has three main subunits: a(1), b(2) and c(10-14). The alpha and beta chains form an alternating ring which encloses part of the gamma chain. F(1) is attached to F(0) by a central stalk formed by the gamma and epsilon chains, while a peripheral stalk is formed by the delta and b chains.

The protein resides in the cell membrane. F(1)F(0) ATP synthase produces ATP from ADP in the presence of a proton or sodium gradient. F-type ATPases consist of two structural domains, F(1) containing the extramembraneous catalytic core and F(0) containing the membrane proton channel, linked together by a central stalk and a peripheral stalk. During catalysis, ATP synthesis in the catalytic domain of F(1) is coupled via a rotary mechanism of the central stalk subunits to proton translocation. Functionally, key component of the F(0) channel; it plays a direct role in translocation across the membrane. A homomeric c-ring of between 10-14 subunits forms the central stalk rotor element with the F(1) delta and epsilon subunits. The sequence is that of ATP synthase subunit c from Buchnera aphidicola subsp. Acyrthosiphon pisum (strain 5A).